A 113-amino-acid polypeptide reads, in one-letter code: MHELGITQNIVAIVNEYAHGAKVRRVLLEIGKLSAIMPDAIKFCFDICSQGTVLEGAVLEILEIPGLAKCRQCGAEIALEKPFGICNCGSVHLDLITGEELKIKEIEVEEVCV.

Ni(2+) is bound at residue H2. C70, C73, C86, and C88 together coordinate Zn(2+).

It belongs to the HypA/HybF family.

In terms of biological role, involved in the maturation of [NiFe] hydrogenases. Required for nickel insertion into the metal center of the hydrogenase. The chain is Hydrogenase maturation factor HypA from Trichormus variabilis (strain ATCC 29413 / PCC 7937) (Anabaena variabilis).